The following is a 29-amino-acid chain: Cytochrome b6-f complex subunit 8 (29 aa).

Residues 3–23 (IVDIAWAALMVVFTFSLSLVV) traverse the membrane as a helical segment.

The protein belongs to the PetN family. As to quaternary structure, the 4 large subunits of the cytochrome b6-f complex are cytochrome b6, subunit IV (17 kDa polypeptide, PetD), cytochrome f and the Rieske protein, while the 4 small subunits are PetG, PetL, PetM and PetN. The complex functions as a dimer.

The protein localises to the plastid. Its subcellular location is the chloroplast thylakoid membrane. Component of the cytochrome b6-f complex, which mediates electron transfer between photosystem II (PSII) and photosystem I (PSI), cyclic electron flow around PSI, and state transitions. In Gnetum parvifolium (Small-leaved jointfir), this protein is Cytochrome b6-f complex subunit 8.